The chain runs to 533 residues: Putative phosphate permease HP_1491 (533 aa).

12 helical membrane passes run 23–43 (IALA…FGQA), 47–67 (GLLL…IGAN), 81–101 (AISM…GAII), 129–149 (VMLA…LIGA), 156–176 (SVVG…AVNW), 182–202 (IVAS…FFLM), 221–241 (VVPY…IVKV), 248–268 (LNFE…FILF), 286–306 (INEL…FAHG), 338–358 (VPLW…SLYG), 372–392 (LDKM…LLAS), and 509–529 (LVTV…LGFI).

This sequence belongs to the inorganic phosphate transporter (PiT) (TC 2.A.20) family.

The protein localises to the cell membrane. Functionally, potential transporter for phosphate. This is Putative phosphate permease HP_1491 from Helicobacter pylori (strain ATCC 700392 / 26695) (Campylobacter pylori).